Here is a 974-residue protein sequence, read N- to C-terminus: Protein bicaudal C homolog 1 (974 aa).

The interval 1-50 (MAAQGEPGYLAAQSDPGSNSERSTDSPVPGSEDDLVAGATLHSPEWSEER) is disordered. Phosphoserine occurs at positions 26, 31, and 43. 2 KH domains span residues 132–199 (RVTL…RVRI) and 284–348 (PVST…RQYL). K398 is modified (N6-acetyllysine). Phosphoserine is present on residues S576, S612, and S679. Disordered regions lie at residues 593–644 (VLSA…GDLK), 665–719 (GTKN…HLAP), and 783–846 (YKPT…KSTE). The segment covering 602-619 (SIQTSGSEQTSPKSSPTE) has biased composition (polar residues). The segment covering 690 to 703 (LADKKAPGSERAAE) has biased composition (basic and acidic residues). Positions 873-936 (FKGSDLPELF…LLAISELNKN (64 aa)) constitute an SAM domain.

The protein belongs to the BicC family. Interacts (via KH domains) with ANKS6 (via SAM domain) in an RNA-dependent manner. Interacts with ANKS3.

The protein localises to the cytoplasm. Putative RNA-binding protein. Acts as a negative regulator of Wnt signaling. May be involved in regulating gene expression during embryonic development. In Homo sapiens (Human), this protein is Protein bicaudal C homolog 1 (BICC1).